Reading from the N-terminus, the 977-residue chain is Kinesin-like protein KIN-14D (977 aa).

Over residues 1–13 (MSSSNNAAAAAAS) the composition is skewed to low complexity. Residues 1 to 20 (MSSSNNAAAAAASPDPSRRR) form a disordered region. In terms of domain architecture, Calponin-homology (CH) spans 17 to 118 (SRRREDVVGW…CILALKDRFG (102 aa)). Positions 297 to 384 (KAEETQRIED…TKRRIELEEL (88 aa)) form a coiled coil. The 329-residue stretch at 472 to 800 (NIRVYCRIRP…LKFAERVSGV (329 aa)) folds into the Kinesin motor domain. 556–563 (GQTGSGKT) is a binding site for ATP. Residues 812-847 (KEGKDVKELMDQLSLLKDTISKKDEEIDRLQLLNSS) are a coiled coil. Residues 852 to 977 (PTRQADSVLK…RNNSTLKRGP (126 aa)) form a disordered region. 2 stretches are compositionally biased toward polar residues: residues 861-879 (KHSS…TSVG) and 956-977 (RKSS…KRGP).

This sequence belongs to the TRAFAC class myosin-kinesin ATPase superfamily. Kinesin family. KIN-14 subfamily.

In Oryza sativa subsp. japonica (Rice), this protein is Kinesin-like protein KIN-14D.